The chain runs to 418 residues: ATP-dependent Clp protease ATP-binding subunit ClpX (418 aa).

Positions 1 to 54 (MTRKDDESDQFFCSFCGKNQKEVKKLIAGPSVYICNECVSLCEEIIEDEDKESL) constitute a ClpX-type ZB domain. Zn(2+)-binding residues include cysteine 13, cysteine 16, cysteine 35, and cysteine 38. ATP is bound at residue 120–127 (PTGCGKTL).

Belongs to the ClpX chaperone family. In terms of assembly, component of the ClpX-ClpP complex. Forms a hexameric ring that, in the presence of ATP, binds to fourteen ClpP subunits assembled into a disk-like structure with a central cavity, resembling the structure of eukaryotic proteasomes.

In terms of biological role, ATP-dependent specificity component of the Clp protease. It directs the protease to specific substrates. Can perform chaperone functions in the absence of ClpP. In Desulforapulum autotrophicum (strain ATCC 43914 / DSM 3382 / VKM B-1955 / HRM2) (Desulfobacterium autotrophicum), this protein is ATP-dependent Clp protease ATP-binding subunit ClpX.